The chain runs to 382 residues: Apolipoprotein A-IV (382 aa).

Residues 1-20 form the signal peptide; that stretch reads MFLRAVVLTLALVAVTGARA. 13 tandem repeats follow at residues 33–54, 60–81, 82–103, 115–136, 137–158, 159–180, 181–202, 203–224, 225–246, 247–268, 269–286, 287–308, and 309–330. A 13 X 22 AA approximate tandem repeats region spans residues 33–330; sequence DYFSQLSNNA…QVEELRQKLG (298 aa). The segment at 362-382 is disordered; sequence ENQDMPLALPEQEQAPGPLES.

It belongs to the apolipoprotein A1/A4/E family. As to quaternary structure, homodimer.

The protein localises to the secreted. Its function is as follows. May have a role in chylomicrons and VLDL secretion and catabolism. Required for efficient activation of lipoprotein lipase by ApoC-II; potent activator of LCAT. Apoa-IV is a major component of HDL and chylomicrons. This chain is Apolipoprotein A-IV (APOA4), found in Acinonyx jubatus (Cheetah).